The primary structure comprises 430 residues: Dolichyl-diphosphooligosaccharide--protein glycosyltransferase subunit WBP1 (430 aa).

An N-terminal signal peptide occupies residues 1–20 (MRTDWNFFFCILLQAIFVVG). Topologically, residues 24–393 (SRTLVLYDQS…PRSWEISNSW (370 aa)) are lumenal. N-linked (GlcNAc...) asparagine glycans are attached at residues asparagine 60 and asparagine 332. Residues 394 to 414 (VYISAICGVIVAWIFFVVSFV) traverse the membrane as a helical segment. Topologically, residues 415–430 (TTSSVGKKLETFKKTN) are cytoplasmic.

Belongs to the DDOST 48 kDa subunit family. As to quaternary structure, component of the oligosaccharyltransferase (OST) complex, which appears to exist in two assemblies comprising OST1, OST2, OST4, OST5, STT3, SWP1, WPB1, and either OST3 or OST6. OST assembly occurs through the formation of 3 subcomplexes. Subcomplex 1 contains OST1 and OST5, subcomplex 2 contains STT3, OST3, and OST4, and subcomplex 3 contains OST2, WBP1, and SWP1. Interacts with SEC61, SBH1 and SSS1.

Its subcellular location is the endoplasmic reticulum membrane. The protein operates within protein modification; protein glycosylation. Its function is as follows. Subunit of the oligosaccharyl transferase (OST) complex that catalyzes the initial transfer of a defined glycan (Glc(3)Man(9)GlcNAc(2) in eukaryotes) from the lipid carrier dolichol-pyrophosphate to an asparagine residue within an Asn-X-Ser/Thr consensus motif in nascent polypeptide chains, the first step in protein N-glycosylation. N-glycosylation occurs cotranslationally and the complex associates with the Sec61 complex at the channel-forming translocon complex that mediates protein translocation across the endoplasmic reticulum (ER). All subunits are required for a maximal enzyme activity. This is Dolichyl-diphosphooligosaccharide--protein glycosyltransferase subunit WBP1 (WBP1) from Saccharomyces cerevisiae (strain ATCC 204508 / S288c) (Baker's yeast).